We begin with the raw amino-acid sequence, 147 residues long: Hemoglobin subunit epsilon (147 aa).

In terms of domain architecture, Globin spans 3-147; the sequence is HFTAEEKAAI…VAIALGHKYH (145 aa). 2 positions are modified to phosphoserine: serine 14 and serine 51. Residues histidine 64 and histidine 93 each coordinate heme b.

The protein belongs to the globin family. As to quaternary structure, heterotetramer of two alpha chains and two epsilon chains in early embryonic hemoglobin Gower-2; two zeta chains and two epsilon chains in early embryonic hemoglobin Gower-1. As to expression, red blood cells.

In terms of biological role, the epsilon chain is a beta-type chain of early mammalian embryonic hemoglobin. The chain is Hemoglobin subunit epsilon (HBE1) from Alouatta belzebul (Red-handed howler monkey).